Here is a 492-residue protein sequence, read N- to C-terminus: uncharacterized protein (492 aa).

Belongs to the FGGY kinase family.

This is an uncharacterized protein from Archaeoglobus fulgidus (strain ATCC 49558 / DSM 4304 / JCM 9628 / NBRC 100126 / VC-16).